Here is a 1328-residue protein sequence, read N- to C-terminus: ABC transporter G family member 2 (1328 aa).

In terms of domain architecture, ABC transporter 1 spans 53–299 (VTARNLSMSI…FEGLGFKLPK (247 aa)). 91–98 (GSPGCGKT) lines the ATP pocket. In terms of domain architecture, ABC transmembrane type-2 1 spans 388–665 (ISSQVAVRMR…FGMYFFLKNV (278 aa)). 7 helical membrane passes run 398 to 418 (IIKS…LDLN), 428 to 448 (LIFF…AILF), 477 to 497 (IPIA…MCGL), 504 to 524 (FIYF…FFKM), 534 to 554 (LASV…GFMA), 559 to 579 (IGGW…FEGL), and 642 to 662 (IDLL…YFFL). The interval 670-691 (RASDPKNDKRSKKASKRSKKIK) is disordered. The span at 678 to 689 (KRSKKASKRSKK) shows a compositional bias: basic residues. Residues 721–960 (VYEVDVKKDG…DLLGYFENHG (240 aa)) form the ABC transporter 2 domain. 755 to 762 (GPSGAGKS) serves as a coordination point for ATP. Residues 1049-1286 (VRRVQNIRTR…PICPITNGNQ (238 aa)) form the ABC transmembrane type-2 2 domain. Transmembrane regions (helical) follow at residues 1059–1076 (LMRS…FVRM), 1087–1107 (VSIL…SIPI), 1128–1148 (IYLF…AIIY), 1172–1192 (FISF…ATVL), 1197–1217 (IAHA…GFMI), and 1303–1323 (AVIF…LKFI).

Belongs to the ABC transporter superfamily. ABCG family. PDR (TC 3.A.1.205) subfamily.

Its subcellular location is the endosome membrane. Functionally, required for endocytosis and endosomal pH regulation. This is ABC transporter G family member 2 (abcG2) from Dictyostelium discoideum (Social amoeba).